We begin with the raw amino-acid sequence, 282 residues long: Nucleotide-binding protein Fnod_1159 (282 aa).

9–16 (GHSGAGKS) contributes to the ATP binding site. 57-60 (DIRS) contributes to the GTP binding site.

It belongs to the RapZ-like family.

Functionally, displays ATPase and GTPase activities. This chain is Nucleotide-binding protein Fnod_1159, found in Fervidobacterium nodosum (strain ATCC 35602 / DSM 5306 / Rt17-B1).